The following is a 128-amino-acid chain: Aspartate 1-decarboxylase (128 aa).

Ser25 acts as the Schiff-base intermediate with substrate; via pyruvic acid in catalysis. Pyruvic acid (Ser) is present on Ser25. Thr57 is a substrate binding site. Residue Tyr58 is the Proton donor of the active site. Position 73-75 (Gly73–Ala75) interacts with substrate.

Belongs to the PanD family. Heterooctamer of four alpha and four beta subunits. Requires pyruvate as cofactor. Is synthesized initially as an inactive proenzyme, which is activated by self-cleavage at a specific serine bond to produce a beta-subunit with a hydroxyl group at its C-terminus and an alpha-subunit with a pyruvoyl group at its N-terminus.

Its subcellular location is the cytoplasm. It catalyses the reaction L-aspartate + H(+) = beta-alanine + CO2. It functions in the pathway cofactor biosynthesis; (R)-pantothenate biosynthesis; beta-alanine from L-aspartate: step 1/1. Functionally, catalyzes the pyruvoyl-dependent decarboxylation of aspartate to produce beta-alanine. The chain is Aspartate 1-decarboxylase from Paraburkholderia phytofirmans (strain DSM 17436 / LMG 22146 / PsJN) (Burkholderia phytofirmans).